The sequence spans 342 residues: Maltose regulon regulatory protein MalI (342 aa).

The HTH lacI-type domain occupies 7–61 (ITIHDVALAAGVSVSTVSLVLSGKGRISTATGERVNAAIEELGFVRNRQASALRG). Residues 9-28 (IHDVALAAGVSVSTVSLVLS) constitute a DNA-binding region (H-T-H motif).

Functionally, repressor for the malX and malY genes. Also regulates its own expression. Binds maltose as an inducer. The polypeptide is Maltose regulon regulatory protein MalI (malI) (Escherichia coli (strain K12)).